A 185-amino-acid polypeptide reads, in one-letter code: Ribosome-recycling factor (185 aa).

The protein belongs to the RRF family.

Its subcellular location is the cytoplasm. Its function is as follows. Responsible for the release of ribosomes from messenger RNA at the termination of protein biosynthesis. May increase the efficiency of translation by recycling ribosomes from one round of translation to another. In Bacillus cereus (strain G9842), this protein is Ribosome-recycling factor.